Reading from the N-terminus, the 280-residue chain is Energy-coupling factor transporter ATP-binding protein EcfA1 (280 aa).

One can recognise an ABC transporter domain in the interval 6 to 241 (LRTENISFQY…SHMLQEIGLD (236 aa)). Position 40–47 (40–47 (GQNGSGKS)) interacts with ATP.

This sequence belongs to the ABC transporter superfamily. Energy-coupling factor EcfA family. In terms of assembly, forms a stable energy-coupling factor (ECF) transporter complex composed of 2 membrane-embedded substrate-binding proteins (S component), 2 ATP-binding proteins (A component) and 2 transmembrane proteins (T component).

It localises to the cell membrane. Functionally, ATP-binding (A) component of a common energy-coupling factor (ECF) ABC-transporter complex. Unlike classic ABC transporters this ECF transporter provides the energy necessary to transport a number of different substrates. This is Energy-coupling factor transporter ATP-binding protein EcfA1 from Bacillus cereus (strain ATCC 10987 / NRS 248).